Here is an 892-residue protein sequence, read N- to C-terminus: Transmembrane channel-like protein 2-B (892 aa).

A disordered region spans residues 29–125 (GINQNLRREE…DESMSEGEMA (97 aa)). Composition is skewed to basic residues over residues 48-58 (RRAKKRRMNRR) and 66-77 (RSKKMRMRVRKN). Positions 103–112 (PSSCSSSSDN) are enriched in low complexity. Helical transmembrane passes span 235–255 (LVLF…MGIP), 275–295 (FSVL…YGFY), 308–328 (LPLS…MVVI), 403–423 (LANV…YAVV), 444–464 (EVEI…EAIA), 482–502 (IFAL…DEVN), 616–636 (LIFN…LVGI), 671–691 (FYMG…IYSI), and 736–756 (GLII…LNAV). A compositionally biased stretch (basic and acidic residues) spans 772-785 (QMQRDEEKNRRNNK). 2 disordered regions span residues 772–791 (QMQR…TNQV) and 796–892 (EDLL…PPRR). Residues 862-878 (PRQPGPLPGNPRGPPPG) are compositionally biased toward pro residues.

The protein belongs to the TMC family. As to expression, in adults, expression is restricted to the hair cells of inner ear and lateral line organ. Expressed at higher levels in the larval lateral-line neuromasts than in the larval inner ear.

It localises to the membrane. Functionally, probable component of the mechanotransducer (MET) non-selective cation channel. This Danio rerio (Zebrafish) protein is Transmembrane channel-like protein 2-B.